A 518-amino-acid polypeptide reads, in one-letter code: Vesicular inhibitory amino acid transporter (518 aa).

Residues 1-125 (MATLIRSKLS…WNVTNAIQGM (125 aa)) lie on the Cytoplasmic side of the membrane. The segment at 66-98 (EVPSGDPTAEGDSHYQRDGTGPPSSASKDEGLC) is disordered. Residues 126 to 146 (FVLGLPYAILHGGYLGLFLII) traverse the membrane as a helical segment. Over 147 to 197 (FAAVVCCYTGKILIACLYEENEDGETVRVRDSYVDIANACCAPRFPKLGGR) the chain is Lumenal, vesicle. The helical transmembrane segment at 198 to 218 (VVNVAQIIELVMTCILYVVVS) threads the bilayer. The Cytoplasmic portion of the chain corresponds to 219–258 (GNLMYNSFPSLPISQKSWSIIATAMLLPCAFLKNLKAVSK). Residues 259 to 279 (FSLLCTLAHFVINVLVIAYCL) form a helical membrane-spanning segment. At 280–298 (SRARDWAWDKVKFYIDVKK) the chain is on the lumenal, vesicle side. Residues 299–319 (FPISIGIIVFSYTSQIFLPSL) traverse the membrane as a helical segment. Over 320–334 (EGNMQSPKEFHCMMN) the chain is Cytoplasmic. The chain crosses the membrane as a helical span at residues 335-355 (WTHIAACILKGLFALVAYLTW). At 356 to 376 (ADETKEVITDNLPSTIRAVVN) the chain is on the lumenal, vesicle side. Residues 377 to 397 (LFLVAKALLSYPLPFFAAVEV) traverse the membrane as a helical segment. The Cytoplasmic portion of the chain corresponds to 398–431 (LEKSLFQEGARAFFPNCYGGDGRLKSWGLTLRCA). The chain crosses the membrane as a helical span at residues 432–452 (LVVFTLLMAIYVPHFALLMGL). The Lumenal, vesicle portion of the chain corresponds to 453–454 (TG). Residues 455 to 475 (SLTGAGLCFLLPSLFHLKLLW) form a helical membrane-spanning segment. The Cytoplasmic segment spans residues 476–482 (RKLQWHQ). Residues 483 to 503 (VFFDVSIFVIGSICSVSGFVH) traverse the membrane as a helical segment. The Lumenal, vesicle portion of the chain corresponds to 504-518 (SLEGLIEAFRFNIED).

The protein belongs to the amino acid/polyamine transporter 2 family.

Its subcellular location is the cytoplasmic vesicle membrane. The protein resides in the presynapse. The enzyme catalyses 4-aminobutanoate(out) + n H(+)(in) = 4-aminobutanoate(in) + n H(+)(out). It catalyses the reaction glycine(out) + n H(+)(in) = glycine(in) + n H(+)(out). It carries out the reaction beta-alanine(out) + n H(+)(in) = beta-alanine(in) + n H(+)(out). Its function is as follows. Antiporter that exchanges vesicular protons for cytosolic 4-aminobutanoate or to a lesser extend glycine, thus allowing their secretion from nerve terminals. The transport is equally dependent on the chemical and electrical components of the proton gradient. May also transport beta-alanine. Acidification of GABAergic synaptic vesicles is a prerequisite for 4-aminobutanoate uptake. The sequence is that of Vesicular inhibitory amino acid transporter from Xenopus tropicalis (Western clawed frog).